Consider the following 764-residue polypeptide: 5-methyltetrahydropteroyltriglutamate--homocysteine methyltransferase (764 aa).

Residues 16–19 (RELK) and Lys112 each bind 5-methyltetrahydropteroyltri-L-glutamate. L-homocysteine is bound by residues 431–433 (IGS) and Glu484. L-methionine is bound by residues 431–433 (IGS) and Glu484. Residues 515–516 (RC) and Trp561 each bind 5-methyltetrahydropteroyltri-L-glutamate. An L-homocysteine-binding site is contributed by Asp599. Asp599 lines the L-methionine pocket. Glu605 provides a ligand contact to 5-methyltetrahydropteroyltri-L-glutamate. His641, Cys643, and Glu665 together coordinate Zn(2+). Residue His694 is the Proton donor of the active site. Cys726 provides a ligand contact to Zn(2+).

It belongs to the vitamin-B12 independent methionine synthase family. Zn(2+) serves as cofactor.

The catalysed reaction is 5-methyltetrahydropteroyltri-L-glutamate + L-homocysteine = tetrahydropteroyltri-L-glutamate + L-methionine. It functions in the pathway amino-acid biosynthesis; L-methionine biosynthesis via de novo pathway; L-methionine from L-homocysteine (MetE route): step 1/1. Catalyzes the transfer of a methyl group from 5-methyltetrahydrofolate to homocysteine resulting in methionine formation. This is 5-methyltetrahydropteroyltriglutamate--homocysteine methyltransferase from Paraburkholderia xenovorans (strain LB400).